We begin with the raw amino-acid sequence, 100 residues long: MAKKNMIQREIKREKLEKKYYLKRLAIKEQLKKTTSFAEKIELRQKLQEMPRNSAPVRSRNRCWLTGRSRGYYRDFGLSRHVFREMSHECLLPGVTKSSW.

This sequence belongs to the universal ribosomal protein uS14 family. In terms of assembly, part of the 30S ribosomal subunit.

It is found in the plastid. It localises to the chloroplast. Binds 16S rRNA, required for the assembly of 30S particles. The polypeptide is Small ribosomal subunit protein uS14c (Porphyra purpurea (Red seaweed)).